We begin with the raw amino-acid sequence, 886 residues long: MSGFSPELIDYLEGKISFEEFERRREERKTREKKSLQEKGKLSAEENPDDSEVPSSSGINSTKSQDKDVNEGETSDGVRKSVHKVFASMLGENEDDEEEEEEEEEEEEEEETPEQPTAGDVFVLEMVLNRETKKMMKEKRPRSKLPRALRGLMGEANIRFARGEREEAILMCMEIIRQAPLAYEPFSTLAMIYEDQGDMEKSLQFELIAAHLNPSDTEEWVRLAEMSLEQDNIKQAIFCYTKALKYEPTNVRYLWERSSLYEQMGDHKMAMDGYRRILNLLSPSDGERFMQLARDMAKSYYEANDVTSAINIIDEAFSKHQGLVSMEDVNIAAELYISNKQYDKALEIITDFSGIVLEKKTSEEGTSEENKAPENVTCTIPDGVPIDITVKLMVCLVHLNILEPLNPLLTTLVEQNPEDMGDLYLDVAEAFLDVGEYNSALPLLSALVCSERYNLAVVWLRHAECLKALGYMERAAESYGKVVDLAPLHLDARISLSTLQQQLGQPEKALEALEPMYDPDTLAQDANAAQQELKLLLHRSTLLFSQGKMYGYVDTLLTMLAMLLKVAMNRAQVCLISSSKSGERHLYLIKVSRDKISDSNDQESANCDAKAIFAVLTSVLTKDDWWNLLLKAIYSLCDLSRFQEAELLVDSSLEYYSFYDDRQKRKELEYFGLSAAILDKNFRKAYNYIRIMVMENVNKPQLWNIFNQVTMHSQDVRHHRFCLRLMLKNPENHALCVLNGHNAFVSGSFKHALGQYVQAFRTHPDEPLYSFCIGLTFIHMASQKYVLRRHALIVQGFSFLNRYLSLRGPCQESFYNLGRGLHQLGLIHLAIHYYQKALELPPLVVEGIELDQLDLRRDIAYNLSLIYQSSGNTGMAQTLLYTYCSI.

The segment at 1–121 (MSGFSPELID…TPEQPTAGDV (121 aa)) is disordered. The residue at position 2 (serine 2) is an N-acetylserine. Over residues 12 to 44 (LEGKISFEEFERRREERKTREKKSLQEKGKLSA) the composition is skewed to basic and acidic residues. Position 43 is a phosphoserine (serine 43). A compositionally biased stretch (polar residues) spans 53–63 (VPSSSGINSTK). A compositionally biased stretch (acidic residues) spans 92 to 113 (ENEDDEEEEEEEEEEEEEEETP). TPR repeat units lie at residues 149–182 (LRGL…APLA), 183–216 (YEPF…NPSD), 217–250 (TEEW…EPTN), 252–284 (RYLW…LSPS), 290–323 (MQLA…HQGL), 326–361 (MEDV…EKKT), 421–454 (GDLY…ERYN), 456–489 (AVVW…APLH), 491–523 (DARI…DTLA), 733–766 (HALC…HPDE), and 811–844 (QESF…PPLV). Serine 282 bears the Phosphoserine mark.

In terms of assembly, part of the TFIIIC subcomplex TFIIIC2, consisting of six subunits, GTF3C1, GTF3C2, GTF3C3, GTF3C4, GTF3C5 and GTF3C6. Interacts with BRF1 and TBP.

Its subcellular location is the nucleus. Its function is as follows. Involved in RNA polymerase III-mediated transcription. Integral, tightly associated component of the DNA-binding TFIIIC2 subcomplex that directly binds tRNA and virus-associated RNA promoters. This chain is General transcription factor 3C polypeptide 3 (GTF3C3), found in Homo sapiens (Human).